A 433-amino-acid chain; its full sequence is Protein translocase subunit SecY (433 aa).

Transmembrane regions (helical) follow at residues 17–37 (IIFT…PIAG), 71–91 (IFAL…LMSV), 117–137 (LTVL…ESIV), 141–161 (GPVV…TLVV), 184–204 (LIIF…MFEL), 212–232 (PLVA…IIFF), 268–288 (GVIP…LANF), 309–329 (IYIL…TAIV), 366–386 (LTVV…LLMN), and 388–408 (YVIS…VVLD).

Belongs to the SecY/SEC61-alpha family. As to quaternary structure, component of the Sec protein translocase complex. Heterotrimer consisting of SecY, SecE and SecG subunits. The heterotrimers can form oligomers, although 1 heterotrimer is thought to be able to translocate proteins. Interacts with the ribosome. Interacts with SecDF, and other proteins may be involved. Interacts with SecA.

Its subcellular location is the cell inner membrane. The central subunit of the protein translocation channel SecYEG. Consists of two halves formed by TMs 1-5 and 6-10. These two domains form a lateral gate at the front which open onto the bilayer between TMs 2 and 7, and are clamped together by SecE at the back. The channel is closed by both a pore ring composed of hydrophobic SecY resides and a short helix (helix 2A) on the extracellular side of the membrane which forms a plug. The plug probably moves laterally to allow the channel to open. The ring and the pore may move independently. This Rickettsia bellii (strain RML369-C) protein is Protein translocase subunit SecY.